We begin with the raw amino-acid sequence, 232 residues long: Phosphoribosylformylglycinamidine synthase subunit PurQ (232 aa).

The region spanning 2-232 (KIAIIQFGGT…SMADYITENF (231 aa)) is the Glutamine amidotransferase type-1 domain. The active-site Nucleophile is cysteine 86. Residues histidine 203 and glutamate 205 contribute to the active site.

As to quaternary structure, part of the FGAM synthase complex composed of 1 PurL, 1 PurQ and 2 PurS subunits.

It localises to the cytoplasm. It carries out the reaction N(2)-formyl-N(1)-(5-phospho-beta-D-ribosyl)glycinamide + L-glutamine + ATP + H2O = 2-formamido-N(1)-(5-O-phospho-beta-D-ribosyl)acetamidine + L-glutamate + ADP + phosphate + H(+). The catalysed reaction is L-glutamine + H2O = L-glutamate + NH4(+). The protein operates within purine metabolism; IMP biosynthesis via de novo pathway; 5-amino-1-(5-phospho-D-ribosyl)imidazole from N(2)-formyl-N(1)-(5-phospho-D-ribosyl)glycinamide: step 1/2. Its function is as follows. Part of the phosphoribosylformylglycinamidine synthase complex involved in the purines biosynthetic pathway. Catalyzes the ATP-dependent conversion of formylglycinamide ribonucleotide (FGAR) and glutamine to yield formylglycinamidine ribonucleotide (FGAM) and glutamate. The FGAM synthase complex is composed of three subunits. PurQ produces an ammonia molecule by converting glutamine to glutamate. PurL transfers the ammonia molecule to FGAR to form FGAM in an ATP-dependent manner. PurS interacts with PurQ and PurL and is thought to assist in the transfer of the ammonia molecule from PurQ to PurL. The chain is Phosphoribosylformylglycinamidine synthase subunit PurQ from Methanosarcina acetivorans (strain ATCC 35395 / DSM 2834 / JCM 12185 / C2A).